A 1647-amino-acid polypeptide reads, in one-letter code: Maestro heat-like repeat-containing protein family member 1 (1647 aa).

HEAT repeat units follow at residues 9 to 47 (SPVL…RQPN), 65 to 103 (QTHR…SEMT), 224 to 262 (SEFY…ILSV), 351 to 389 (RGYS…RLDV), 597 to 635 (DVTL…TIKN), 968 to 1006 (FDSI…IGFM), 1131 to 1168 (SLAN…DKNL), 1364 to 1400 (KELI…AGVE), 1403 to 1441 (NRYA…VADE), 1490 to 1528 (YEQI…LMRS), and 1612 to 1647 (NINS…LHHY).

It belongs to the MROH1 family. Homooligomer.

Its subcellular location is the lysosome membrane. Functionally, lysosome fission factor. This is Maestro heat-like repeat-containing protein family member 1 (mroh1) from Dictyostelium discoideum (Social amoeba).